Consider the following 176-residue polypeptide: Ribosome maturation factor RimM (176 aa).

A PRC barrel domain is found at 100-173; the sequence is KDEYHYHDLI…WLLINPPPGL (74 aa).

Belongs to the RimM family. Binds ribosomal protein uS19.

It localises to the cytoplasm. In terms of biological role, an accessory protein needed during the final step in the assembly of 30S ribosomal subunit, possibly for assembly of the head region. Essential for efficient processing of 16S rRNA. May be needed both before and after RbfA during the maturation of 16S rRNA. It has affinity for free ribosomal 30S subunits but not for 70S ribosomes. The polypeptide is Ribosome maturation factor RimM (Prochlorococcus marinus (strain NATL2A)).